Consider the following 177-residue polypeptide: MSRVGKLPITIPEGVKIGLNDLEVKISGPKGELSKTFKGNIAISLAENKLLVKPLAANKNARAMWGTARSIISNMVTGVKEGFKLKLEINGVGYRAMVKGKYLNLMLAKSHNTKIEIPSDIKIEMPKQNIIILEGTDKEKLGQFASIIIKQRPPEPYKGKGIKFENQCIPRKEGKKN.

Belongs to the universal ribosomal protein uL6 family. In terms of assembly, part of the 50S ribosomal subunit.

Functionally, this protein binds to the 23S rRNA, and is important in its secondary structure. It is located near the subunit interface in the base of the L7/L12 stalk, and near the tRNA binding site of the peptidyltransferase center. The polypeptide is Large ribosomal subunit protein uL6 (Rickettsia conorii (strain ATCC VR-613 / Malish 7)).